The primary structure comprises 898 residues: Protein kintoun (898 aa).

Disordered stretches follow at residues 558-680 (GELK…VESD) and 765-822 (ILGQ…SGIS). The span at 575–602 (INTRTVEDDTKVAKENVKKVDQETAHEG) shows a compositional bias: basic and acidic residues. Residues 603 to 616 (KKSKKNQRRKNKKR) show a composition bias toward basic residues. The span at 641–656 (NEANSFEGTGSSSEAT) shows a compositional bias: polar residues.

The protein belongs to the PIH1 family. Kintoun subfamily.

The protein resides in the cytoplasm. Functionally, required for cytoplasmic pre-assembly of axonemal dyneins, thereby playing a central role in motility in cilia and flagella. Involved in pre-assembly of dynein arm complexes in the cytoplasm before intraflagellar transport loads them for the ciliary compartment. In Aedes aegypti (Yellowfever mosquito), this protein is Protein kintoun.